A 400-amino-acid polypeptide reads, in one-letter code: NADH-ubiquinone oxidoreductase 49 kDa subunit (400 aa).

Belongs to the complex I 49 kDa subunit family.

It is found in the mitochondrion. It carries out the reaction a ubiquinone + NADH + 5 H(+)(in) = a ubiquinol + NAD(+) + 4 H(+)(out). In terms of biological role, core subunit of the mitochondrial membrane respiratory chain NADH dehydrogenase (Complex I) that is believed to belong to the minimal assembly required for catalysis. Complex I functions in the transfer of electrons from NADH to the respiratory chain. The immediate electron acceptor for the enzyme is believed to be ubiquinone. Component of the iron-sulfur (IP) fragment of the enzyme. Component of the iron-sulfur (IP) fragment of the enzyme. The polypeptide is NADH-ubiquinone oxidoreductase 49 kDa subunit (NAD7) (Prototheca wickerhamii).